We begin with the raw amino-acid sequence, 192 residues long: Virion infectivity factor (192 aa).

The interval 14–17 is interaction with host APOBEC3F; F1-box; that stretch reads DRMR. Residues 40-44 are interaction with host APOBEC3G; G-box; sequence YRHHY. Residues 54-72 form an interaction with host APOBEC3F and APOBEC3G; FG-box region; sequence EVHIPLGEARLVVTTYWGL. Residues 74–79 are interaction with host APOBEC3F; F2-box; sequence TGEKEW. Positions 75–114 are RNA-binding; the sequence is GEKEWHLGQGVSIEWRKRRYSTQVDPGLADQLIHMYYFDC. Thr96 is modified (phosphothreonine; by host MAP4K1). Zn(2+)-binding residues include His108, Cys114, Cys133, and His139. The short motif at 108-139 is the HCCH motif element; that stretch reads HMYYFDCFAESAIRKAILGHIVSPSCEYQAGH. Residue Ser144 is modified to Phosphoserine; by host. A BC-box-like motif motif is present at residues 144–153; it reads SLQYLALAAL. The interval 151-164 is multimerization; that stretch reads AALIAPKKIKPPLP. Positions 151 to 180 are SOCS box-like; it reads AALIAPKKIKPPLPSVRKLTEDRWNKPQKT. Ser165 is modified (phosphoserine; by host MAP4K1). Positions 165-192 are disordered; that stretch reads SVRKLTEDRWNKPQKTKGRRGSHTMNGH. The tract at residues 171–172 is membrane association; that stretch reads ED. Residues 176 to 186 show a composition bias toward basic residues; it reads KPQKTKGRRGS. The residue at position 188 (Thr188) is a Phosphothreonine; by host.

It belongs to the primate lentivirus group Vif protein family. Homomultimer; in vitro and presumably in vivo. Interacts with viral RNA and Pr55Gag precursor; these interactions mediate Vif incorporation into the virion. Interacts with the viral reverse transcriptase. Forms cullin-5-RING E3 ubiquitin-protein ligase complex (ECS complex) by interacting with host CUL5, RBX2, elongin BC complex (ELOB and ELOC) and CBFB/CBF-beta. Within the ECS complex, Vif interacts directly with host CUL5, ELOC and APOBEC (APOBEC3F and APOBEC3G) substrates. The ECS complex also contains some single-stranded RNA (ssRNA) that acts as a glue that bridges Vif with APOBEC (APOBEC3F and APOBEC3G) substrates. Interacts with host UBCE7IP1 isoform 3/ZIN and possibly with SAT. Interacts with host tyrosine kinases HCK and FYN; these interactions may decrease level of phosphorylated APOBEC3G incorporation into virions. Interacts with host ABCE1; this interaction may play a role in protecting viral RNA from damage during viral assembly. Interacts with host MDM2; this interaction targets Vif for degradation by the proteasome. Processed in virion by the viral protease. In terms of processing, highly phosphorylated on serine and threonine residues. Post-translationally, polyubiquitinated and degraded by the proteasome in the presence of APOBEC3G.

Its subcellular location is the host cytoplasm. It localises to the host cell membrane. The protein localises to the virion. Counteracts the innate antiviral activity of host APOBEC3F and APOBEC3G by promoting their ubiquitination and degradation. Acts as a substrate recognition component of an E3 ubiquitin-protein ligase complex: mechanistically, Vif hijacks a host cullin-5-RING E3 ubiquitin-protein ligase complex (ECS complex) and the transcription coactivator CBFB/CBF-beta to form an active E3 ubiquitin-protein ligase complex that targets APOBEC3G and APOBEC3F for polyubiquitination, leading to their degradation by the proteasome. Vif interaction with APOBEC3G also blocks its cytidine deaminase activity in a proteasome-independent manner, suggesting a dual inhibitory mechanism. May interact directly with APOBEC3G mRNA in order to inhibit its translation. Association with CBFB/CBF-beta also inhibits the transcription coactivator activity of CBFB/CBF-beta. Seems to play a role in viral morphology by affecting the stability of the viral nucleoprotein core. Finally, Vif also contributes to the G2 cell cycle arrest observed in HIV infected cells. The sequence is that of Virion infectivity factor from Human immunodeficiency virus type 1 group M subtype D (isolate NDK) (HIV-1).